The sequence spans 217 residues: Ras-related protein Rab-19 (217 aa).

GTP-binding residues include Ser-26, Val-28, Gly-29, Lys-30, Thr-31, Cys-32, Tyr-42, Thr-43, Glu-44, Thr-45, and Thr-49. Residue Thr-31 coordinates Mg(2+). Positions 39-54 (SGVYTETQQNTIGVDF) match the Switch 1 motif. 2 residues coordinate Mg(2+): Thr-49 and Asp-72. The Switch 2 motif lies at 74-89 (AGQERFRTITQSYYRS). Residues Gly-75, Asn-130, Lys-131, Asp-133, Ser-161, Ala-162, and Lys-163 each contribute to the GTP site. 2 S-geranylgeranyl cysteine lipidation sites follow: Cys-215 and Cys-217. Cys-217 is modified (cysteine methyl ester).

Belongs to the small GTPase superfamily. Rab family. Requires Mg(2+) as cofactor.

It localises to the cell membrane. It catalyses the reaction GTP + H2O = GDP + phosphate + H(+). Its activity is regulated as follows. Regulated by guanine nucleotide exchange factors (GEFs) which promote the exchange of bound GDP for free GTP. Regulated by GTPase activating proteins (GAPs) which increase the GTP hydrolysis activity. Inhibited by GDP dissociation inhibitors (GDIs). Its function is as follows. The small GTPases Rab are key regulators of intracellular membrane trafficking, from the formation of transport vesicles to their fusion with membranes. Rabs cycle between an inactive GDP-bound form and an active GTP-bound form that is able to recruit to membranes different set of downstream effectors directly responsible for vesicle formation, movement, tethering and fusion. This Homo sapiens (Human) protein is Ras-related protein Rab-19.